Consider the following 871-residue polypeptide: Protein TIC 100 (871 aa).

Residues 1–85 (MANEELTESQ…NANPETNIRR (85 aa)) form a disordered region. Residues 8 to 20 (ESQQQEDPSQQLP) are compositionally biased toward polar residues. Low complexity predominate over residues 30–46 (SDSNSDSDASSQSSGDD). MORN repeat units lie at residues 219 to 239 (YEGTVWDDLAQGKGVYIAENG), 243 to 257 (YEGEWLQNDMEGHGV), and 337 to 352 (YAGQWKHSRMHGCGVY). The residue at position 238 (Asn238) is a Deamidated asparagine. A coiled-coil region spans residues 587–647 (MLDGLEKWTE…QEEEKKTEMG (61 aa)). Disordered stretches follow at residues 631-654 (EELKKKEQEEEKKTEMGLTEEDED) and 669-721 (KEKI…NSPF). Residues 632–645 (ELKKKEQEEEKKTE) show a composition bias toward basic and acidic residues. Phosphothreonine is present on Thr649. The span at 669-683 (KEKIQENKQEEKYKD) shows a compositional bias: basic and acidic residues. A compositionally biased stretch (acidic residues) spans 684–704 (DDDEDDDDGDDDDDDDDDDDL).

In terms of assembly, part of the Tic complex. Component of the 1-MD complex, composed of TIC20-I, TIC214, TIC100 and TIC56. Interacts with the translocating preproteins. Hydrolysis of ATP is essential for the formation of this complex. The 1-MD complex interacts with TIC21. In terms of tissue distribution, preferentially expressed in ovules, and moderately expressed in leaves and siliques.

It localises to the plastid. Its subcellular location is the chloroplast inner membrane. In terms of biological role, involved in protein precursor import into chloroplasts. May be part of an intermediate translocation complex acting as a protein-conducting channel at the inner envelope. Plays an important role during embryogenesis and chloroplast biogenesis. This Arabidopsis thaliana (Mouse-ear cress) protein is Protein TIC 100.